The primary structure comprises 601 residues: NADH-ubiquinone oxidoreductase chain 5 (601 aa).

Helical transmembrane passes span 3 to 23 (LIMP…MMSY), 36 to 56 (VTSS…MFLL), 84 to 104 (FFSI…MEFS), 114 to 134 (INQF…LVTA), 140 to 160 (LFIG…WWYG), 171 to 191 (AILY…WLLL), 201 to 221 (IFML…AAAG), 240 to 260 (TPVS…FLLV), 272 to 292 (ILTM…ICAL), 324 to 346 (AFLH…GSII), 365 to 385 (MPFT…MPFL), 404 to 426 (NAWA…TRLI), 456 to 476 (LALG…PLIT), 483 to 503 (LYMK…AMGL), and 581 to 601 (LIKL…MLII).

Belongs to the complex I subunit 5 family.

Its subcellular location is the mitochondrion inner membrane. It carries out the reaction a ubiquinone + NADH + 5 H(+)(in) = a ubiquinol + NAD(+) + 4 H(+)(out). Functionally, core subunit of the mitochondrial membrane respiratory chain NADH dehydrogenase (Complex I) that is believed to belong to the minimal assembly required for catalysis. Complex I functions in the transfer of electrons from NADH to the respiratory chain. The immediate electron acceptor for the enzyme is believed to be ubiquinone. In Dasypus novemcinctus (Nine-banded armadillo), this protein is NADH-ubiquinone oxidoreductase chain 5 (MT-ND5).